The following is a 447-amino-acid chain: Signal recognition particle 54 kDa protein (447 aa).

GTP is bound by residues 103 to 110, 185 to 189, and 245 to 248; these read GVQGSGKT, DTAGR, and TKMD.

The protein belongs to the GTP-binding SRP family. SRP54 subfamily. Part of the signal recognition particle protein translocation system, which is composed of SRP and FtsY. Archaeal SRP consists of a 7S RNA molecule of 300 nucleotides and two protein subunits: SRP54 and SRP19.

It is found in the cytoplasm. The enzyme catalyses GTP + H2O = GDP + phosphate + H(+). Its function is as follows. Involved in targeting and insertion of nascent membrane proteins into the cytoplasmic membrane. Binds to the hydrophobic signal sequence of the ribosome-nascent chain (RNC) as it emerges from the ribosomes. The SRP-RNC complex is then targeted to the cytoplasmic membrane where it interacts with the SRP receptor FtsY. In Saccharolobus islandicus (strain Y.G.57.14 / Yellowstone #1) (Sulfolobus islandicus), this protein is Signal recognition particle 54 kDa protein.